A 55-amino-acid polypeptide reads, in one-letter code: Large ribosomal subunit protein bL33 (55 aa).

This sequence belongs to the bacterial ribosomal protein bL33 family.

The chain is Large ribosomal subunit protein bL33 from Rhizobium johnstonii (strain DSM 114642 / LMG 32736 / 3841) (Rhizobium leguminosarum bv. viciae).